A 138-amino-acid polypeptide reads, in one-letter code: uncharacterized protein (138 aa).

The MsrB domain maps to 9-133 (EDEWKKELGP…NSASLEFHNE (125 aa)). Residues cysteine 49, cysteine 52, cysteine 97, and cysteine 100 each coordinate Zn(2+). Catalysis depends on cysteine 122, which acts as the Nucleophile.

Belongs to the MsrB Met sulfoxide reductase family. The cofactor is Zn(2+).

The protein resides in the cytoplasm. Its subcellular location is the nucleus. This is an uncharacterized protein from Schizosaccharomyces pombe (strain 972 / ATCC 24843) (Fission yeast).